A 193-amino-acid chain; its full sequence is Signal peptidase I (193 aa).

At 1-25 (MTEEQKPTSEKSVKRKSNTYWEWGK) the chain is on the cytoplasmic side. A helical membrane pass occupies residues 26-42 (AIIIAVALALLIRHFLF). The Extracellular segment spans residues 43 to 193 (EPYLVEGSSM…FPFHDMRQTK (151 aa)). Catalysis depends on residues Ser-51 and Lys-93.

Belongs to the peptidase S26 family.

It is found in the cell membrane. The enzyme catalyses Cleavage of hydrophobic, N-terminal signal or leader sequences from secreted and periplasmic proteins.. The polypeptide is Signal peptidase I (sipS2) (Bacillus amyloliquefaciens (Bacillus velezensis)).